The following is a 301-amino-acid chain: Glycine--tRNA ligase alpha subunit (301 aa).

The protein belongs to the class-II aminoacyl-tRNA synthetase family. In terms of assembly, tetramer of two alpha and two beta subunits.

The protein localises to the cytoplasm. It carries out the reaction tRNA(Gly) + glycine + ATP = glycyl-tRNA(Gly) + AMP + diphosphate. This Glaesserella parasuis serovar 5 (strain SH0165) (Haemophilus parasuis) protein is Glycine--tRNA ligase alpha subunit.